The sequence spans 81 residues: Large ribosomal subunit protein bL31B (81 aa).

It belongs to the bacterial ribosomal protein bL31 family. Type B subfamily. As to quaternary structure, part of the 50S ribosomal subunit.

The polypeptide is Large ribosomal subunit protein bL31B (Pediococcus pentosaceus (strain ATCC 25745 / CCUG 21536 / LMG 10740 / 183-1w)).